The primary structure comprises 35 residues: MGFDIHLIANFGALALITLAGPAVIFILFYRRGAL.

A helical transmembrane segment spans residues 7-27 (LIANFGALALITLAGPAVIFI).

It belongs to the Psb30/Ycf12 family. In terms of assembly, PSII is composed of 1 copy each of membrane proteins PsbA, PsbB, PsbC, PsbD, PsbE, PsbF, PsbH, PsbI, PsbJ, PsbK, PsbL, PsbM, PsbT, PsbX, PsbY, PsbZ, Psb30/Ycf12, peripheral proteins PsbO, CyanoQ (PsbQ), PsbU, PsbV and a large number of cofactors. It forms dimeric complexes.

Its subcellular location is the cellular thylakoid membrane. A core subunit of photosystem II (PSII), probably helps stabilize the reaction center. The sequence is that of Photosystem II reaction center protein Psb30 from Synechococcus sp. (strain CC9311).